The primary structure comprises 310 residues: Malate dehydrogenase (310 aa).

NAD(+)-binding positions include 7–12 and Asp-32; that span reads GAGHVG. Arg-81 and Arg-87 together coordinate substrate. Residues Asn-94 and 117-119 contribute to the NAD(+) site; that span reads VSN. Asn-119 and Arg-150 together coordinate substrate. The active-site Proton acceptor is the His-174.

This sequence belongs to the LDH/MDH superfamily. MDH type 3 family.

The catalysed reaction is (S)-malate + NAD(+) = oxaloacetate + NADH + H(+). In terms of biological role, catalyzes the reversible oxidation of malate to oxaloacetate. The polypeptide is Malate dehydrogenase (Chlorobium phaeobacteroides (strain BS1)).